The chain runs to 73 residues: Antitoxin VapB2 (73 aa).

Forms a homodimer, which binds to a toxin homodimer, which then oligomerizes further to a hetero-octamer. When bound to toxin VapC2 the toxin activity is inhibited; 1 antitoxin may suffice to inhibit toxin.

Its function is as follows. Antitoxin component of a type II toxin-antitoxin (TA) system. Upon expression in M.smegmatis neutralizes the effect of cognate toxin VapC2. The C-terminal helix of the antitoxin may obstruct the toxin's RNA-binding groove, blocking access to the active sites. Additionally, the C-terminal arginine of the antitoxin may remove Mg(2+) ions from the toxin active sites. The protein is Antitoxin VapB2 (vapB2) of Mycobacterium tuberculosis (strain ATCC 25618 / H37Rv).